The following is an 882-amino-acid chain: MNTADVPDNLQSWGQQPSSSYSNTQQHSQMTNLPPINHNNLCDTEPMNEDFQLQDVQADELQKQQKQQEQQHIQQQNAQRFIAQSRQPHSNILRFPQPPITSIKTNSHAFYPQQEVTQVRPKKHRVSMTNAEAALTPGMPPEKQAAKKRNIGQFSTDTVPAGIGMIGIPFESTSKPLQIQQFRNPQDAPVRKLTSDLIKTYKAINESFYLRKQVRRDRHKSQDAGKPKGSKDGSGASLTDTFSIHNAIPITSSDNHYQQDAHQNAPPLLDTNAPPTSTMVVPMRTETDLQQQQRQKSSRGGPYNNGYDDQNYDYILKNGEIFDKRYVILSDTPVGKGSFGQVTKAYDTLNKEEVAIKIIKNKKTFFDQAQIEIHLLELTNAHDKDNKYNIVTLKGHFVHRAHLCLVFELLSYNLYDLLKNTSFRGVSLNLARKFAQQLGKTLLFLSSPELSIIHCDLKPENVLLVNAKRSQIRVIDFGSSCQTGHRIYQYIQSRFYRSPEVLLGIAYDTKIDMWSLGCILVEMHTGEPLFAGSSEVDQMMKIVEVLGMPPKEMLDIGPKTHKYFDKTEDGIYYCKKTRDGYRHTYKAPGARKLHEILGVTSGGPGGRRLGEPGHSVEDYSKFKDLIKRMLQFDPKQRISPYYVVRHPFLKQKEERVPSQPPVSHSNLQQQQQLYIQQPSSQMSQVMESPSVGSVYVEDNGMYRQAPGSSANPISVTSSFDEGDAMEVDAGRRRFSAHQQNYHNPNYQYSQPQQQQQQQYQQTQRTQLEQQQKQAQLQQQLQQQQMQQQQQQQQQRQHMPQAQSSSQQHLQSRARPRQQDQNEWRNQFELDDTFQQKQRKVDDSVSNQISRNQFNPQQVSMTHGNVNANNREMEKLDYPNNKL.

Positions 1 to 42 (MNTADVPDNLQSWGQQPSSSYSNTQQHSQMTNLPPINHNNLC) are enriched in polar residues. 4 disordered regions span residues 1-45 (MNTA…CDTE), 62-81 (QKQQ…AQRF), 212-239 (KQVR…ASLT), and 255-308 (NHYQ…NGYD). Residues 64–79 (QQKQQEQQHIQQQNAQ) show a composition bias toward low complexity. Basic and acidic residues predominate over residues 220 to 231 (KSQDAGKPKGSK). Low complexity predominate over residues 290–308 (QQQQRQKSSRGGPYNNGYD). Residues 328-649 (ILSDTPVGKG…PYYVVRHPFL (322 aa)) form the Protein kinase domain. ATP-binding positions include 334-342 (VGKGSFGQV) and Lys-357. Asp-456 acts as the Proton acceptor in catalysis. 2 disordered regions span residues 742–761 (HNPN…QYQQ) and 789–882 (QQQQ…NNKL). Low complexity-rich tracts occupy residues 747–761 (QYSQ…QYQQ) and 789–810 (QQQQ…QHLQ). The segment covering 816–827 (RQQDQNEWRNQF) has biased composition (basic and acidic residues). The span at 843 to 869 (SVSNQISRNQFNPQQVSMTHGNVNANN) shows a compositional bias: polar residues.

It belongs to the protein kinase superfamily. CMGC Ser/Thr protein kinase family. MNB/DYRK subfamily. Mg(2+) is required as a cofactor. Expressed in all somatic cells.

It localises to the nucleus. It catalyses the reaction L-seryl-[protein] + ATP = O-phospho-L-seryl-[protein] + ADP + H(+). The catalysed reaction is L-threonyl-[protein] + ATP = O-phospho-L-threonyl-[protein] + ADP + H(+). The enzyme catalyses L-tyrosyl-[protein] + ATP = O-phospho-L-tyrosyl-[protein] + ADP + H(+). Functionally, possible role in the function of olfactory neurons. The polypeptide is Dual specificity tyrosine-phosphorylation-regulated kinase mbk-1 (Caenorhabditis elegans).